Consider the following 1020-residue polypeptide: Calcium-transporting ATPase 1 (1020 aa).

The residue at position 1 (methionine 1) is an N-acetylmethionine. Topologically, residues 1 to 162 are stromal; it reads MESYLNENFG…NQFTESPSRG (162 aa). The interaction with calmodulin stretch occupies residues 21-32; it reads ALQRWRKLCWIV. Serine 46 carries the phosphoserine; by CPK modification. The helical transmembrane segment at 163–183 threads the bilayer; it reads FWLFVWEALQDTTLMILAACA. The Lumenal segment spans residues 184 to 201; sequence FVSLIVGILMEGWPIGAH. The helical transmembrane segment at 202–222 threads the bilayer; that stretch reads DGLGIVASILLVVFVTATSDY. Residues 223-350 lie on the Stromal side of the membrane; the sequence is RQSLQFKDLD…DDETPLQVKL (128 aa). A helical transmembrane segment spans residues 351–370; that stretch reads NGVATIIGKIGLFFAVITFA. Topologically, residues 371–400 are lumenal; sequence VLVQGLANQKRLDNSHWIWTADELMAMLEY. A helical transmembrane segment spans residues 401-418; the sequence is FAVAVTIVVVAVPEGLPL. The Stromal segment spans residues 419–813; it reads AVTLSLAFAM…KWGRSVYINI (395 aa). The active-site 4-aspartylphosphate intermediate is the aspartate 456. Residues aspartate 758 and aspartate 762 each coordinate Mg(2+). A helical membrane pass occupies residues 814 to 832; sequence QKFVQFQLTVNVVALIVNF. Topologically, residues 833–843 are lumenal; that stretch reads LSACLTGNAPL. A helical transmembrane segment spans residues 844-864; the sequence is TAVQLLWVNMIMDTLGALALA. Residues 865–884 lie on the Stromal side of the membrane; sequence TEPPQDDLMKRSPVGRKGNF. A helical membrane pass occupies residues 885-907; it reads ISNVMWRNILGQSLYQLVIIWCL. Residues 908-919 are Lumenal-facing; it reads QTKGKTMFGLDG. The helical transmembrane segment at 920–941 threads the bilayer; it reads PDSDLTLNTLIFNIFVFCQVFN. The Stromal segment spans residues 942-959; that stretch reads EISSREMEKIDVFKGILK. The chain crosses the membrane as a helical span at residues 960 to 981; sequence NYVFVAVLTCTVVFQVIIIELL. At 982–991 the chain is on the lumenal side; the sequence is GTFADTTPLN. Residues 992-1013 traverse the membrane as a helical segment; sequence LGQWLVSIILGFLGMPVAAALK. At 1014-1020 the chain is on the stromal side; the sequence is MIPVGSH.

Belongs to the cation transport ATPase (P-type) (TC 3.A.3) family. Type IIB subfamily. Expressed at higher levels in roots than in leaves.

The protein resides in the plastid. The protein localises to the chloroplast inner membrane. The catalysed reaction is Ca(2+)(in) + ATP + H2O = Ca(2+)(out) + ADP + phosphate + H(+). With respect to regulation, activated by calmodulin. This magnesium-dependent enzyme catalyzes the hydrolysis of ATP coupled with the translocation of calcium from the cytosol out of the cell or into organelles. This Arabidopsis thaliana (Mouse-ear cress) protein is Calcium-transporting ATPase 1 (ACA1).